A 411-amino-acid chain; its full sequence is Phospholipase ABHD3 (411 aa).

Residues 25 to 45 traverse the membrane as a helical; Signal-anchor for type II membrane protein segment; the sequence is VGFFGSGVGLSLILGFSVAYA. The AB hydrolase-1 domain occupies 140-233; that stretch reads PTILLLPGLT…MLLLNYLGKI (94 aa). Active-site charge relay system residues include serine 220, aspartate 346, and histidine 375.

It belongs to the AB hydrolase superfamily. AB hydrolase 4 family. Widely expressed with higher expression in liver.

Its subcellular location is the membrane. The catalysed reaction is a 1,2-diacyl-sn-glycero-3-phosphocholine + H2O = a 1-acyl-sn-glycero-3-phosphocholine + a fatty acid + H(+). The enzyme catalyses a 1,2-diacyl-sn-glycero-3-phosphocholine + H2O = a 2-acyl-sn-glycero-3-phosphocholine + a fatty acid + H(+). It carries out the reaction 1-tetradecanoyl-2-(9Z,12Z-octadecadienoyl)-sn-glycero-3-phosphocholine + H2O = 2-(9Z,12Z-octadecadienoyl)-sn-glycero-3-phosphocholine + tetradecanoate + H(+). It catalyses the reaction 1-tetradecanoyl-2-(9Z,12Z-octadecadienoyl)-sn-glycero-3-phosphocholine + H2O = 1-tetradecanoyl-sn-glycero-3-phosphocholine + (9Z,12Z)-octadecadienoate + H(+). The catalysed reaction is 1-tetradecanoyl-2-(5Z,8Z,11Z,14Z-eicosatetraenoyl)-sn-glycero-3-phosphocholine + H2O = 2-(5Z,8Z,11Z,14Z)-eicosatetraenoyl-sn-glycero-3-phosphocholine + tetradecanoate + H(+). The enzyme catalyses 1-tetradecanoyl-2-(4Z,7Z,10Z,13Z,16Z,19Z-docosahexaenoyl)-sn-glycero-3-phosphocholine + H2O = 2-(4Z,7Z,10Z,13Z,16Z,19Z-docosahexaenoyl)-sn-glycero-3-phosphocholine + tetradecanoate + H(+). It carries out the reaction 1,2-ditetradecanoyl-sn-glycero-3-phosphocholine + H2O = 2-tetradecanoyl-sn-glycero-3-phosphocholine + tetradecanoate + H(+). It catalyses the reaction 1-octadecanoyl-2-acetyl-sn-glycero-3-phosphocholine + H2O = 1-octadecanoyl-sn-glycero-3-phosphocholine + acetate + H(+). The catalysed reaction is 1,2-ditetradecanoyl-sn-glycero-3-phosphocholine + H2O = 1-tetradecanoyl-sn-glycero-3-phosphocholine + tetradecanoate + H(+). The enzyme catalyses 1-octadecanoyl-2-pentanoyl-sn-glycero-3-phosphocholine + H2O = pentanoate + 1-octadecanoyl-sn-glycero-3-phosphocholine + H(+). It carries out the reaction 1-octadecanoyl-2-hexanoyl-sn-glycero-3-phosphocholine + H2O = hexanoate + 1-octadecanoyl-sn-glycero-3-phosphocholine + H(+). It catalyses the reaction 1-octadecanoyl-2-octanoyl-sn-glycero-3-phosphocholine + H2O = 1-octadecanoyl-sn-glycero-3-phosphocholine + octanoate + H(+). The catalysed reaction is 1-octadecanoyl-2-nonanoyl-sn-glycero-3-phosphocholine + H2O = nonanoate + 1-octadecanoyl-sn-glycero-3-phosphocholine + H(+). The enzyme catalyses 1-O-hexadecyl-2-nonadioyl-sn-glycero-3-phosphocholine + H2O = nonanedioate + 1-O-hexadecyl-sn-glycero-3-phosphocholine + H(+). It carries out the reaction 1-hexadecanoyl-2-nonadioyl-sn-glycero-3-phosphocholine + H2O = nonanedioate + 1-hexadecanoyl-sn-glycero-3-phosphocholine + H(+). It catalyses the reaction 1-hexadecanoyl-2-(9-oxononanoyl)-sn-glycero-3-phosphocholine + H2O = 9-oxononanoate + 1-hexadecanoyl-sn-glycero-3-phosphocholine + H(+). The catalysed reaction is 1-hexadecanoyl-2-(5-oxopentanoyl)-sn-glycero-3-phosphocholine + H2O = 5-oxopentanoate + 1-hexadecanoyl-sn-glycero-3-phosphocholine + H(+). The enzyme catalyses 1-hexadecanoyl-2-glutaroyl-sn-glycero-3-phosphocholine + H2O = glutarate + 1-hexadecanoyl-sn-glycero-3-phosphocholine + H(+). It carries out the reaction 1-O-hexadecyl-2-acetyl-sn-glycero-3-phosphocholine + H2O = 1-O-hexadecyl-sn-glycero-3-phosphocholine + acetate + H(+). Its function is as follows. Phospholipase that may play a role in phospholipids remodeling. May selectively cleave myristate (C14)-containing phosphatidylcholines through its predominant phospholipase 1 activity, cleaving preferentially acyl groups in sn1 position. In parallel, may have a minor phospholipase 2 activity acting on acyl groups in position sn2. In addition to (C14)-containing phosphatidylcholines, may also act on other medium-chain-containing and oxidatively truncated phospholipids. This is Phospholipase ABHD3 from Mus musculus (Mouse).